We begin with the raw amino-acid sequence, 313 residues long: GTPase Era (313 aa).

Residues 13–186 (RSGFVSFVGR…ADLLVGLLPE (174 aa)) form the Era-type G domain. Positions 21–28 (GRPNAGKS) are G1. Residue 21 to 28 (GRPNAGKS) coordinates GTP. The G2 stretch occupies residues 47 to 51 (QTTRT). The segment at 68 to 71 (DTPG) is G3. GTP contacts are provided by residues 68-72 (DTPGL) and 131-134 (TKTD). Positions 131–134 (TKTD) are G4. Residues 165-167 (VSA) are G5. In terms of domain architecture, KH type-2 spans 217-299 (LRDELPHSVA…YLDLHVKIAK (83 aa)).

The protein belongs to the TRAFAC class TrmE-Era-EngA-EngB-Septin-like GTPase superfamily. Era GTPase family. Monomer.

The protein localises to the cytoplasm. The protein resides in the cell membrane. An essential GTPase that binds both GDP and GTP, with rapid nucleotide exchange. Plays a role in 16S rRNA processing and 30S ribosomal subunit biogenesis and possibly also in cell cycle regulation and energy metabolism. The polypeptide is GTPase Era (Nocardioides sp. (strain ATCC BAA-499 / JS614)).